Consider the following 179-residue polypeptide: MQTLLIIRGHSGSGKSTFALQKMAEFKQNFTEGVLFHVENDHFLRENGEYHWTVERFQQAKQLAQQQLADALNYCVENPQHDVCIVLSNVGGNAKEIEKVVARATSYGLHTEVYRLQNFFPNTHGVDAQVVYEMYLHLCDQPVQNEILLPPIQPMTKAICREIKKLQAQKRKNRYTKKM.

This is an uncharacterized protein from Pasteurella multocida (strain Pm70).